The following is a 156-amino-acid chain: Ribonuclease 7 (156 aa).

Positions 1 to 28 (MAPARAGFCPLLLLLLLGLWVAEIPVSA) are cleaved as a signal peptide. Positions 29-32 (KPKG) are important for antibacterial activity. His-43 acts as the Proton acceptor in catalysis. Positions 43, 66, 69, and 70 each coordinate dUMP. Disulfide bonds link Cys-51–Cys-109, Cys-65–Cys-119, Cys-83–Cys-134, and Cys-90–Cys-97. N-linked (GlcNAc...) asparagine glycosylation is present at Asn-127. The tract at residues 139-140 (KK) is important for antibacterial activity. Positions 151 and 154 each coordinate dUMP. The active-site Proton donor is His-151.

Expressed in collecting ducts in kidney, and in apical uroepithelium in bladder (at protein level). Expressed in various epithelial tissues including skin, respiratory tract, genito-urinary tract and, at a low level, in the gut. Expressed in liver, kidney, skeletal muscle and heart.

It localises to the secreted. Its function is as follows. Exhibits a potent RNase activity. Has broad-spectrum antimicrobial activity against many pathogenic microorganisms including uropathogenic E.coli (UPEC), and remarkably potent activity (lethal dose of 90% &lt; 30 nM) against a vancomycin resistant Enterococcus faecium. Causes loss of bacterial membrane integrity. Probably contributes to urinary tract sterility. Bactericidal activity is independent of RNase activity. This is Ribonuclease 7 (RNASE7) from Homo sapiens (Human).